The sequence spans 291 residues: 4-hydroxy-tetrahydrodipicolinate synthase (291 aa).

Thr45 is a pyruvate binding site. The active-site Proton donor/acceptor is Tyr131. Lys159 serves as the catalytic Schiff-base intermediate with substrate. Ile202 is a binding site for pyruvate.

This sequence belongs to the DapA family. As to quaternary structure, homotetramer; dimer of dimers.

It localises to the cytoplasm. It catalyses the reaction L-aspartate 4-semialdehyde + pyruvate = (2S,4S)-4-hydroxy-2,3,4,5-tetrahydrodipicolinate + H2O + H(+). Its pathway is amino-acid biosynthesis; L-lysine biosynthesis via DAP pathway; (S)-tetrahydrodipicolinate from L-aspartate: step 3/4. Its function is as follows. Catalyzes the condensation of (S)-aspartate-beta-semialdehyde [(S)-ASA] and pyruvate to 4-hydroxy-tetrahydrodipicolinate (HTPA). The protein is 4-hydroxy-tetrahydrodipicolinate synthase of Methanosarcina acetivorans (strain ATCC 35395 / DSM 2834 / JCM 12185 / C2A).